Consider the following 125-residue polypeptide: Large ribosomal subunit protein bL12 (125 aa).

It belongs to the bacterial ribosomal protein bL12 family. In terms of assembly, homodimer. Part of the ribosomal stalk of the 50S ribosomal subunit. Forms a multimeric L10(L12)X complex, where L10 forms an elongated spine to which 2 to 4 L12 dimers bind in a sequential fashion. Binds GTP-bound translation factors.

Forms part of the ribosomal stalk which helps the ribosome interact with GTP-bound translation factors. Is thus essential for accurate translation. In Granulibacter bethesdensis (strain ATCC BAA-1260 / CGDNIH1), this protein is Large ribosomal subunit protein bL12.